Here is a 715-residue protein sequence, read N- to C-terminus: Palmitoyltransferase ZDHHC5 (715 aa).

Residues 1–13 (MPAESGKRFKPSK) are Cytoplasmic-facing. A helical membrane pass occupies residues 14 to 34 (YVPVSAAAIFLVGATTLFFAF). Residues 35-52 (TCPGLSLDVSPAVPIYNA) are Extracellular-facing. The chain crosses the membrane as a helical span at residues 53–73 (IMFLFVLANFSMATFMDPGIF). Over 74-148 (PRAEEDEDKE…NCIGRRNYRY (75 aa)) the chain is Cytoplasmic. Y91 carries the post-translational modification Phosphotyrosine. The region spanning 104-154 (KWCATCRFYRPPRCSHCSVCDNCVEEFDHHCPWVNNCIGRRNYRYFFLFLL) is the DHHC domain. Catalysis depends on C134, which acts as the S-palmitoyl cysteine intermediate. A helical transmembrane segment spans residues 149–169 (FFLFLLSLTAHIMGVFGFGLL). The Extracellular portion of the chain corresponds to 170 to 191 (YVLCHIEELSGVRTAVTMAVMC). A helical transmembrane segment spans residues 192 to 212 (VAGLFFIPVAGLTGFHVVLVA). The Cytoplasmic segment spans residues 213–715 (RGRTTNEQVT…VGGTTYEISV (503 aa)). At S247 the chain carries Phosphoserine. The segment at 289–715 (GELRRTKSKG…VGGTTYEISV (427 aa)) is disordered. Residue T294 is modified to Phosphothreonine. Residues S296 and S299 each carry the phosphoserine modification. T303 is modified (phosphothreonine). Phosphoserine is present on S345. Phosphothreonine occurs at positions 348 and 350. The segment covering 359–373 (SSSSTSAAMPHSSSA) has biased composition (low complexity). A phosphoserine mark is found at S380, S398, S406, and S409. T411 carries the phosphothreonine modification. Residues S415, S425, S429, and S432 each carry the phosphoserine modification. Low complexity predominate over residues 422–432 (SSGSRSSSLKS). A Phosphothreonine modification is found at T436. Over residues 442 to 478 (QLQSIRSEGTTSTSYKSLANQTRNGSLSYDSLLTPSD) the composition is skewed to polar residues. A phosphoserine mark is found at S529 and S554. The segment covering 581 to 597 (PRTSSSSDDSKRSPLSK) has biased composition (low complexity). R617 is subject to Omega-N-methylarginine. S621 is modified (phosphoserine). T659 carries the post-translational modification Phosphothreonine. Positions 666-677 (LKTTYSKSNGQP) are enriched in polar residues. Phosphoserine occurs at positions 684 and 694. An Omega-N-methylarginine modification is found at R697.

This sequence belongs to the DHHC palmitoyltransferase family. ERF2/ZDHHC9 subfamily. In terms of processing, autopalmitoylated. Palmitoylation of the C-terminal tail regulates stimulation-dependent plasma membrane motility. Post-translationally, phosphorylation regulates association with endocytic proteins and its subcellular localization. Phosphorylation by LYN during fatty acid uptake leads to inactivation of the activity.

It localises to the cell membrane. The enzyme catalyses L-cysteinyl-[protein] + hexadecanoyl-CoA = S-hexadecanoyl-L-cysteinyl-[protein] + CoA. Functionally, palmitoyltransferase that catalyzes the addition of palmitate onto various protein substrates such as CTNND2, CD36, GSDMD, NLRP3, NOD1, NOD2, STAT3 and S1PR1 thus plays a role in various biological processes including cell adhesion, inflammation, fatty acid uptake, bacterial sensing or cardiac functions. Plays an important role in the regulation of synapse efficacy by mediating palmitoylation of delta-catenin/CTNND2, thereby increasing synaptic delivery and surface stabilization of alpha-amino-3-hydroxy-5-methyl-4-isoxazole propionic acid receptors (AMPARs). Under basal conditions, remains at the synaptic membrane through FYN-mediated phosphorylation that prevents association with endocytic proteins. Neuronal activity enhances the internalization and trafficking of DHHC5 from spines to dendritic shafts where it palmitoylates delta-catenin/CTNND2. Regulates cell adhesion at the plasma membrane by palmitoylating GOLGA7B and DSG2. Plays a role in innate immune response by mediating the palmitoylation of NOD1 and NOD2 and their proper recruitment to the bacterial entry site and phagosomes. Also participates in fatty acid uptake by palmitoylating CD36 and thereby targeting it to the plasma membrane. Upon binding of fatty acids to CD36, gets phosphorylated by LYN leading to inactivation and subsequent CD36 caveolar endocytosis. Controls oligodendrocyte development by catalyzing STAT3 palmitoylation. Acts as a regulator of inflammatory response by mediating palmitoylation of NLRP3 and GSDMD. Palmitoylates NLRP3 to promote inflammasome assembly and activation. Activates pyroptosis by catalyzing palmitoylation of gasdermin-D (GSDMD), thereby promoting membrane translocation and pore formation of GSDMD. The sequence is that of Palmitoyltransferase ZDHHC5 (Zdhhc5) from Rattus norvegicus (Rat).